Consider the following 216-residue polypeptide: Uracil phosphoribosyltransferase (216 aa).

Residues Arg-85, Arg-110, and 135 to 143 (DPMVATGYS) contribute to the 5-phospho-alpha-D-ribose 1-diphosphate site. Residues Ile-200 and 205–207 (GDA) contribute to the uracil site. Asp-206 lines the 5-phospho-alpha-D-ribose 1-diphosphate pocket.

It belongs to the UPRTase family. It depends on Mg(2+) as a cofactor.

It carries out the reaction UMP + diphosphate = 5-phospho-alpha-D-ribose 1-diphosphate + uracil. It participates in pyrimidine metabolism; UMP biosynthesis via salvage pathway; UMP from uracil: step 1/1. Its activity is regulated as follows. Allosterically activated by GTP. Its function is as follows. Catalyzes the conversion of uracil and 5-phospho-alpha-D-ribose 1-diphosphate (PRPP) to UMP and diphosphate. In Burkholderia cenocepacia (strain ATCC BAA-245 / DSM 16553 / LMG 16656 / NCTC 13227 / J2315 / CF5610) (Burkholderia cepacia (strain J2315)), this protein is Uracil phosphoribosyltransferase.